A 221-amino-acid chain; its full sequence is Dynein light chain Tctex-type 4 (221 aa).

Disordered stretches follow at residues 1-52 and 65-87; these read MASR…SRRG and NSLV…VPPL. Residues 10-21 are compositionally biased toward basic and acidic residues; it reads RQEEENAKDSGR. S66 is modified (phosphoserine).

The protein belongs to the dynein light chain Tctex-type family. Interacts with ENG/endoglin, TGFBR2 and TGFBR3. Interacts with PPP1CC. As to expression, ubiquitously expressed. Expressed in testis (at protein level).

The protein localises to the cell projection. It localises to the cilium. The protein resides in the flagellum. It is found in the cytoplasmic vesicle. Its subcellular location is the secretory vesicle. The protein localises to the acrosome. It localises to the cytoplasm. The protein resides in the cytoskeleton. It is found in the cilium axoneme. Its subcellular location is the nucleus. The protein localises to the microtubule organizing center. The sequence is that of Dynein light chain Tctex-type 4 from Homo sapiens (Human).